The chain runs to 993 residues: MATQVIMVGEFKILEVNCKPHAPVAAIHVPTQTPKTNDIKWADLEFTLAKSLQRQAHGVVKVDKHGTARIKRASKHHMSCLEQQMADEVAEKEAFMAAPTQLVTSIIFAGTTPPSMMETETIVKKIHTVGKRAKVMRKRSYITPPTDKSLRNHGVTPYSVQQLCRTLGNLSKRTGISLEVVGKTSKATKLRFTKTSFGHMARVQLKHHDGRMHRRDLVVDTSTTTIMQTLFLKTARTNANLDVLTHGSSGLVFWNYLVTGQRMRTRDNFIIVRGRCNGILVDARAKLSESTMLSTHHYSTGDVFWRGFNRTFLENKPINLDHVCSSDFSVEECGSIAALICQSLLPCGKITCRACAAKNLNMDEDTFKEFQTQRAREISAVIISEHPNFACVSQFIDRYFSHQRVLNPNVNAYREILKIVGGFTQSPYTHIQELNEILVLGGRATPEQLGSASAHLLEITRFVRNRTDNIKKGSLALFRNKISAKAHVNTALMCDNQLDRNGNLIWGERGYHAKRFFSNYFDIITPGGGYKQYIERRVPNGIRKLAIGNLIVTTNLEALREQLEGESIEKKAVTKACVSMSDNNYKYPCCCVTLDDGTPLYSTFIMPTKNHLVIGNSGDPKFLDLPADISTQMYIAKSGYCYINIFLAMLVNVDESDAKDFTKKVRDIIVPDLGEWPTLIDVATSCSLLSAFYPATSAAELPRILVDHDLKTMHVIDSYGSLNTGYHVLKANTIRQLIQFASNSLDSEMKHYRVGGTSNSQINGYATIKMLAKAVYRPKLMKEIIHEQPFMLVMSLMSPGILIALANSGALEMGIHHWIREGDSLVKMAHMLRTVAQNVSVARATWVQQEIISDSAQQMLETILNGTIPNVSYFQAIQYLTMLAASKEVDAEVRVTGYYTFKLQTSELLEKNLLEPVGGFMARVKLFWKISSNKTFAKVLHCGYNCCQARKARRLRRNLRYILSVCTGQTDGILQESSLSGCEWIASPIQQHH.

The region spanning glycine 154 to tyrosine 298 is the Peptidase S30 domain. Active-site for P1 proteinase activity residues include histidine 207, aspartate 216, and serine 249. The Involved in interaction with stylet and aphid transmission motif lies at lysine 349–cysteine 352. An Involved in virions binding and aphid transmission motif is present at residues proline 607–lysine 609. In terms of domain architecture, Peptidase C6 spans methionine 633 to glycine 755. Residues cysteine 641 and histidine 714 each act as for helper component proteinase activity in the active site.

The protein belongs to the potyviridae P3N-PIPO polyprotein family. In terms of assembly, interacts (via PIPO domain) with host PCaP1 protein; this interaction may help to anchor the movement complex to the plasma membrane from which the complex could move to the plasmodesmata. Potyviral RNA is expressed as two polyproteins which undergo post-translational proteolytic processing. Genome polyprotein is processed by NIa-pro, P1 and HC-pro proteinases resulting in the production of at least ten individual proteins. P3N-PIPO is cleaved by P1 and HC-pro proteinases resulting in the production of three individual proteins. The P1 proteinase and the HC-pro cleave only their respective C-termini autocatalytically.

It is found in the host cell junction. The protein resides in the host plasmodesma. The catalysed reaction is Hydrolyzes a Gly-|-Gly bond at its own C-terminus, commonly in the sequence -Tyr-Xaa-Val-Gly-|-Gly, in the processing of the potyviral polyprotein.. In terms of biological role, required for aphid transmission and also has proteolytic activity. Only cleaves a Gly-Gly dipeptide at its own C-terminus. Interacts with virions and aphid stylets. Acts as a suppressor of RNA-mediated gene silencing, also known as post-transcriptional gene silencing (PTGS), a mechanism of plant viral defense that limits the accumulation of viral RNAs. May have RNA-binding activity. Functionally, allows efficient cell to cell propagation, by bypassing the host cell wall barrier. Transports viral genome to neighboring plant cells directly through plasmosdesmata, without any budding. The protein is P3N-PIPO polyprotein of Solanum betaceum (Tamarillo).